The primary structure comprises 415 residues: Serine hydroxymethyltransferase (415 aa).

(6S)-5,6,7,8-tetrahydrofolate is bound by residues leucine 122 and 126–128; that span reads GHL. At lysine 230 the chain carries N6-(pyridoxal phosphate)lysine.

This sequence belongs to the SHMT family. Homodimer. Pyridoxal 5'-phosphate is required as a cofactor.

It localises to the cytoplasm. The enzyme catalyses (6R)-5,10-methylene-5,6,7,8-tetrahydrofolate + glycine + H2O = (6S)-5,6,7,8-tetrahydrofolate + L-serine. It functions in the pathway one-carbon metabolism; tetrahydrofolate interconversion. The protein operates within amino-acid biosynthesis; glycine biosynthesis; glycine from L-serine: step 1/1. In terms of biological role, catalyzes the reversible interconversion of serine and glycine with tetrahydrofolate (THF) serving as the one-carbon carrier. This reaction serves as the major source of one-carbon groups required for the biosynthesis of purines, thymidylate, methionine, and other important biomolecules. Also exhibits THF-independent aldolase activity toward beta-hydroxyamino acids, producing glycine and aldehydes, via a retro-aldol mechanism. In Cupriavidus necator (strain ATCC 17699 / DSM 428 / KCTC 22496 / NCIMB 10442 / H16 / Stanier 337) (Ralstonia eutropha), this protein is Serine hydroxymethyltransferase.